A 236-amino-acid polypeptide reads, in one-letter code: Thiamine import ATP-binding protein ThiQ (236 aa).

An ABC transporter domain is found at 2–230 (LKLEKITYLY…SAAKASVLGI (229 aa)). Residue 32–39 (GPSGAGKS) coordinates ATP.

This sequence belongs to the ABC transporter superfamily. Thiamine importer (TC 3.A.1.19.1) family. The complex is composed of two ATP-binding proteins (ThiQ), two transmembrane proteins (ThiP) and a solute-binding protein (ThiB).

The protein localises to the cell inner membrane. It catalyses the reaction thiamine(out) + ATP + H2O = thiamine(in) + ADP + phosphate + H(+). In terms of biological role, part of the ABC transporter complex ThiBPQ involved in thiamine import. Responsible for energy coupling to the transport system. In Yersinia pestis bv. Antiqua (strain Antiqua), this protein is Thiamine import ATP-binding protein ThiQ.